A 527-amino-acid chain; its full sequence is D-3-phosphoglycerate dehydrogenase (527 aa).

NAD(+) is bound by residues 149-150, D169, 228-230, and D254; these read RV and AAR. The active site involves R230. The active site involves E259. Catalysis depends on H278, which acts as the Proton donor. 278-281 serves as a coordination point for NAD(+); sequence HIAA. In terms of domain architecture, ACT spans 453 to 527; the sequence is YIISLHEDKP…GIIDATYVEL (75 aa).

This sequence belongs to the D-isomer specific 2-hydroxyacid dehydrogenase family.

The catalysed reaction is (2R)-3-phosphoglycerate + NAD(+) = 3-phosphooxypyruvate + NADH + H(+). It functions in the pathway amino-acid biosynthesis; L-serine biosynthesis; L-serine from 3-phospho-D-glycerate: step 1/3. The chain is D-3-phosphoglycerate dehydrogenase (serA) from Archaeoglobus fulgidus (strain ATCC 49558 / DSM 4304 / JCM 9628 / NBRC 100126 / VC-16).